Here is a 162-residue protein sequence, read N- to C-terminus: Sorting nexin-3 (162 aa).

Ala-2 is subject to N-acetylalanine. The 125-residue stretch at 27 to 151 (NFLEIDVSNP…HMFLQDEIID (125 aa)) folds into the PX domain. Arg-43 carries the omega-N-methylarginine modification. 4 residues coordinate a 1,2-diacyl-sn-glycero-3-phospho-(1D-myo-inositol-3-phosphate): Arg-70, Ser-72, Lys-95, and Arg-118. Position 72 is a phosphoserine (Ser-72). Lys-95 participates in a covalent cross-link: Glycyl lysine isopeptide (Lys-Gly) (interchain with G-Cter in SUMO2). A binds predominantly to PtdIns(P5) and weaker to PtdIns(P3) abd PtdIns(P4); involved in neurite outgrowth regulation region spans residues 147–162 (DEIIDKSYTPSKIRHA).

Belongs to the sorting nexin family. Interacts with VPS26A, VPS29 and VPS35; the interaction with VPS35 is direct. The association with the retromer CSC subcomplex subunits is proposed to represent a functional distinct retromer variant described as SNX3-retromer complex. Interacts with USP10 and SCNN1A. Interacts with TRFC. Interacts with SNX8; 2 molecules of SNX8 seems to associate with one molecule of SNX3. Interacts with PTPRU. Interacts with MON2 and DOP1B. Ubiquitinated, leading to its proteasomal degradation. Deubiquitinated by USP10.

Its subcellular location is the early endosome. It localises to the cytoplasmic vesicle. The protein resides in the phagosome. In terms of biological role, phosphoinositide-binding protein required for multivesicular body formation. Specifically binds phosphatidylinositol 3-phosphate (PtdIns(P3)). Can also bind phosphatidylinositol 4-phosphate (PtdIns(P4)), phosphatidylinositol 5-phosphate (PtdIns(P5)) and phosphatidylinositol 3,5-biphosphate (PtdIns(3,5)P2). Plays a role in protein transport between cellular compartments. Together with RAB7A facilitates endosome membrane association of the retromer cargo-selective subcomplex (CSC/VPS). May in part act as component of the SNX3-retromer complex which mediates the retrograde endosome-to-TGN transport of WLS distinct from the SNX-BAR retromer pathway. Promotes stability and cell surface expression of epithelial sodium channel (ENAC) subunits SCNN1A and SCNN1G. Not involved in EGFR degradation. Involved in the regulation of phagocytosis in dendritic cells possibly by regulating EEA1 recruitment to the nascent phagosomes. Involved in iron homeostasis through regulation of endocytic recycling of the transferrin receptor TFRC presumably by delivering the transferrin:transferrin receptor complex to recycling endosomes; the function may involve the CSC retromer subcomplex. In the case of Salmonella enterica infection plays arole in maturation of the Salmonella-containing vacuole (SCV) and promotes recruitment of LAMP1 to SCVs. In Homo sapiens (Human), this protein is Sorting nexin-3.